Here is a 251-residue protein sequence, read N- to C-terminus: Phosphomannomutase (251 aa).

The Nucleophile role is filled by Asp18. Mg(2+)-binding residues include Asp18 and Asp20. Residue Asp20 is the Proton donor/acceptor of the active site. Alpha-D-mannose 1-phosphate is bound by residues Arg27, Arg129, Arg140, Arg147, Ser185, and Asp187. Mg(2+)-binding residues include Asp213, Phe225, Asp227, and Thr230.

It belongs to the eukaryotic PMM family. As to quaternary structure, homodimer. Mg(2+) is required as a cofactor.

Its subcellular location is the cytoplasm. It carries out the reaction alpha-D-mannose 1-phosphate = D-mannose 6-phosphate. Its pathway is nucleotide-sugar biosynthesis; GDP-alpha-D-mannose biosynthesis; alpha-D-mannose 1-phosphate from D-fructose 6-phosphate: step 2/2. Catalyzes the interconversion of mannose-6-phosphate to mannose-1-phosphate, the precursor for the synthesis of GDP-mannose. GDP-mannose is an essential sugar nucleotide for the synthesis of D-mannose-containing cell wall polysaccharides (galactomannans and glucomannans), glycolipids, glycoproteins and the antioxidant L-ascorbate. In Galdieria sulphuraria (Red alga), this protein is Phosphomannomutase.